A 314-amino-acid polypeptide reads, in one-letter code: MRFFIADDDRAVRSILRQIIEDEDLGEAAGEADDGSQVEGHMLQFKQIDILLIDLLMPGRDGIETIRQIQNTYSGKIVMISQVEAKEMVGEAYSLGIEYFIHKPINRIEIVTVLQKVKERIELEHSIGAIQHSLSRLVNRTERKARPQQKSDSGLKEAGTFLLSELGMMGEGGAHDLMAVLQYLAEHEQSEPHEKQSPSLKQIFTQVAVRKLGTGASQTEVNREMKASEQRIRRAIIHSLHHFASLGTTDFSNPKFETYASKFFDFPVVSQKMKELQSKDAKPLAPARINMKKFIHVFFLEAKLLHETMKQRRI.

One can recognise a Response regulatory domain in the interval 2–118 (RFFIADDDRA…EIVTVLQKVK (117 aa)). Asp-54 is modified (4-aspartylphosphate).

Phosphorylated by GlnK.

It is found in the cytoplasm. Member of the two-component regulatory system GlnL/GlnK that positively regulates the expression of the glsA-glnT operon in response to glutamine. GlnL binds the promoter region of glsA-glnT in vitro. This Bacillus subtilis (strain 168) protein is Transcriptional regulatory protein GlnL (glnL).